The sequence spans 181 residues: SRP-independent targeting protein 2 (181 aa).

Topologically, residues 1-15 (MAGKAGRKQASSNAK) are cytoplasmic. The chain crosses the membrane as a helical span at residues 16–36 (IIQGLYKQVSLFLGMAIVRLF). At 37 to 45 (ISRKVTIGQ) the chain is on the lumenal side. Residues 46 to 66 (WIKLVALNVPMFVALYIIVLS) form a helical membrane-spanning segment. Residues 67-89 (GKPKYDGNRVVKQGIDLNDNTNL) lie on the Cytoplasmic side of the membrane. Residues 90–110 (ISYFFDLIYLSLFGNIGIIAF) traverse the membrane as a helical segment. Over 111 to 112 (RT) the chain is Lumenal. A helical transmembrane segment spans residues 113 to 133 (FKFWWCLLLCPIYAGYKLYGL). Residues 134–181 (KNMFMPGAQQTQADNRSKNANEGQSKSKRQMKRERRGETDSKIKYKYR) are Cytoplasmic-facing. Over residues 144–157 (TQADNRSKNANEGQ) the composition is skewed to polar residues. Positions 144 to 181 (TQADNRSKNANEGQSKSKRQMKRERRGETDSKIKYKYR) are disordered. Over residues 168–181 (RRGETDSKIKYKYR) the composition is skewed to basic and acidic residues.

It belongs to the TMEM208 family. Interacts with SND1, PHO88/SND3 and the translocon complex subunit SEC61. ENV10/SND2 and PHO88/SND3 form a complex with the translocon in the endoplasmic reticulum membrane.

The protein localises to the endoplasmic reticulum membrane. In terms of biological role, functions in the SND pathway, a SRP (signal recognition particle) and GET (guided entry of tail-anchored proteins) independent pathway for targeting a broad range of substrate proteins to the endoplasmic reticulum. SND functions in parallel to GET in targeting proteins with downstream hydrophobic motifs. Involved in vacuolar processing and morphology. The polypeptide is SRP-independent targeting protein 2 (Saccharomyces cerevisiae (strain ATCC 204508 / S288c) (Baker's yeast)).